The primary structure comprises 311 residues: Heme A synthase (311 aa).

Over 1 to 6 the chain is Cytoplasmic; the sequence is MQRFIK. The helical transmembrane segment at 7–27 threads the bilayer; it reads WLAVITSLDLLIVLLGGALVT. At 28 to 62 the chain is on the extracellular side; sequence KTGSGQGCGKSWPLCNGEFVPSNLSMETIIELSHR. A disulfide bridge connects residues cysteine 35 and cysteine 42. Residue glutamate 58 is part of the active site. Histidine 61 provides a ligand contact to heme o. Residues 63 to 83 traverse the membrane as a helical segment; it reads LTSGSAGILVTLLCILSWKYY. The Cytoplasmic portion of the chain corresponds to 84–91; it reads KHVRETKT. The helical transmembrane segment at 92 to 112 threads the bilayer; it reads LAILSFVFLVAQALMGAAAVV. Residues 113-121 lie on the Extracellular side of the membrane; that stretch reads WGQMPAVLA. The helical transmembrane segment at 122–142 threads the bilayer; the sequence is IHFGISLISFASVILLTCLIF. Histidine 123 lines the heme o pocket. Residues 143–159 lie on the Cytoplasmic side of the membrane; that stretch reads EIDQKFDARSLIMDKKM. Residues 160-180 form a helical membrane-spanning segment; it reads KFHIYGVTIYCYLVVYTGALV. The Extracellular portion of the chain corresponds to 181-211; it reads RHERASLACPDFPLCSKNRPMPTQLHEWVQM. A disulfide bridge links cysteine 189 with cysteine 195. Residues 212 to 232 form a helical membrane-spanning segment; that stretch reads GHRLAAMLIFVWILYAMILAI. Residue histidine 213 coordinates heme b. At 233-243 the chain is on the cytoplasmic side; sequence RHYKQQPVVYW. The chain crosses the membrane as a helical span at residues 244-264; it reads GWIISFILVTLQAIVGILVVF. Residues 265-271 lie on the Extracellular side of the membrane; it reads TNASLAM. The helical transmembrane segment at 272–292 threads the bilayer; it reads ALLHSLFISCLFAVLCYLVML. Residue histidine 275 coordinates heme b. Topologically, residues 293 to 311 are cytoplasmic; sequence GTRSKVNAKEAASTSKQTK.

This sequence belongs to the COX15/CtaA family. Type 1 subfamily. As to quaternary structure, interacts with CtaB. Requires heme b as cofactor.

Its subcellular location is the cell membrane. It catalyses the reaction Fe(II)-heme o + 2 A + H2O = Fe(II)-heme a + 2 AH2. It functions in the pathway porphyrin-containing compound metabolism; heme A biosynthesis; heme A from heme O: step 1/1. Functionally, catalyzes the conversion of heme O to heme A by two successive hydroxylations of the methyl group at C8. The first hydroxylation forms heme I, the second hydroxylation results in an unstable dihydroxymethyl group, which spontaneously dehydrates, resulting in the formyl group of heme A. This is Heme A synthase from Bacillus cereus (strain 03BB102).